The following is a 427-amino-acid chain: Dihydroorotase (427 aa).

Zn(2+) contacts are provided by H60 and H62. Substrate contacts are provided by residues 62–64 and N94; that span reads HLR. The Zn(2+) site is built by D151, H178, and H231. Position 277 (N277) interacts with substrate. D304 serves as a coordination point for Zn(2+). D304 is an active-site residue. Residues H308 and 322–323 contribute to the substrate site; that span reads FG.

Belongs to the metallo-dependent hydrolases superfamily. DHOase family. Class I DHOase subfamily. Zn(2+) is required as a cofactor.

It catalyses the reaction (S)-dihydroorotate + H2O = N-carbamoyl-L-aspartate + H(+). It participates in pyrimidine metabolism; UMP biosynthesis via de novo pathway; (S)-dihydroorotate from bicarbonate: step 3/3. Its function is as follows. Catalyzes the reversible cyclization of carbamoyl aspartate to dihydroorotate. This is Dihydroorotase from Pelotomaculum thermopropionicum (strain DSM 13744 / JCM 10971 / SI).